We begin with the raw amino-acid sequence, 714 residues long: MFNVHSVEIEWAGRPLKLETGKIARQADGAVLASYGETVVLATVVSAKSPKPGQDFFPLTVNYQEKTYAAGKIPGGYFKREGRPSEKETLVSRLIDRPIRPLFPEGYKNDTQVVVTVIQHDLENDPDVLSMVAASAALTLSGVPFMGPVGGARVGYINGEYVLNPHLDEMDESVLDLVVAGTQDAVLMVESEAKELNEDVMLGAVMFGHRGFQPVIDAIIKLAEVAAKEPREFEPEDHSALEAEMLSIAEAELRDAYKITQKADRYTAVDAVKAKVKAHFFPEGAEPKYTNEVIGAVFKHLQAKIVRWNILDTKSRIDGRDLETVRAIVSEVGILPRTHGSALFTRGETQAIVVATLGTGEDEQYVDSLTGMYKERFLLHYNFPPYSVGETGRMGSPGRREIGHGKLAWRAIRPMLPSPEQFPYTLRVVSEITESNGSSSMATVCGTSLALMDAGVPLAKPVAGIAMGLILEGERFAVLSDILGDEDHLGDMDFKVAGTEAGITSLQMDIKIAGITEEIMKVALAQAQNGRKHILGEMANAITEGRSQLGEFAPRIEVMTIPVDKIREVIGSGGKVIREIVEKTGAKINIEDDGTIKIASASGKEIEAARKWIHSIVAEPEIGVVYEGTVVKTADFGAFVNFFGSRDGLVHISQLAVDRVAKTQDVVKEGDKVWVKLMGFDERGKVRLSMKVVDQATGKEIVGDKKAEGDAAAE.

Residues Asp-487 and Asp-493 each contribute to the Mg(2+) site. One can recognise a KH domain in the interval 554-613 (PRIEVMTIPVDKIREVIGSGGKVIREIVEKTGAKINIEDDGTIKIASASGKEIEAARKWI). The S1 motif domain occupies 623 to 691 (GVVYEGTVVK…ERGKVRLSMK (69 aa)).

This sequence belongs to the polyribonucleotide nucleotidyltransferase family. It depends on Mg(2+) as a cofactor.

The protein resides in the cytoplasm. The enzyme catalyses RNA(n+1) + phosphate = RNA(n) + a ribonucleoside 5'-diphosphate. Involved in mRNA degradation. Catalyzes the phosphorolysis of single-stranded polyribonucleotides processively in the 3'- to 5'-direction. In Allorhizobium ampelinum (strain ATCC BAA-846 / DSM 112012 / S4) (Agrobacterium vitis (strain S4)), this protein is Polyribonucleotide nucleotidyltransferase.